Reading from the N-terminus, the 397-residue chain is Argininosuccinate synthase (397 aa).

Residues 9-17 and Ala35 each bind ATP; that span reads AFSGGLDTS. Tyr88 and Ser93 together coordinate L-citrulline. Residue Gly117 participates in ATP binding. Residues Thr119, Asn123, and Asp124 each contribute to the L-aspartate site. L-citrulline is bound at residue Asn123. Arg127 contacts L-citrulline.

Belongs to the argininosuccinate synthase family. Type 1 subfamily. Homotetramer.

The protein resides in the cytoplasm. The enzyme catalyses L-citrulline + L-aspartate + ATP = 2-(N(omega)-L-arginino)succinate + AMP + diphosphate + H(+). The protein operates within amino-acid biosynthesis; L-arginine biosynthesis; L-arginine from L-ornithine and carbamoyl phosphate: step 2/3. The sequence is that of Argininosuccinate synthase from Xanthomonas campestris pv. campestris (strain ATCC 33913 / DSM 3586 / NCPPB 528 / LMG 568 / P 25).